An 86-amino-acid chain; its full sequence is Venom metalloproteinase (86 aa).

Asp-7 serves as a coordination point for Ca(2+). Residue His-67 coordinates Zn(2+). Glu-68 is a catalytic residue. Zn(2+) is bound by residues His-71 and His-77.

It belongs to the venom metalloproteinase (M12B) family. It depends on Zn(2+) as a cofactor. Expressed by the venom gland.

It localises to the secreted. The protein is Venom metalloproteinase of Tityus serrulatus (Brazilian scorpion).